A 512-amino-acid polypeptide reads, in one-letter code: Cytochrome P450 monooxygenase ABA1 (512 aa).

A helical transmembrane segment spans residues 13-32 (HWLSGILAIATVYLATSYII). Cys458 contributes to the heme binding site.

The protein belongs to the cytochrome P450 family. The cofactor is heme.

It is found in the membrane. The protein operates within hormone biosynthesis. Cytochrome P450 monooxygenase involved in the biosynthesis of abscisic acid (ABA), a phytohormone that acts antagonistically toward salicylic acid (SA), jasmonic acid (JA) and ethylene (ETH) signaling, to impede plant defense responses. During pathogen-host interaction, ABA plays a dual role in disease severity by increasing plant susceptibility and accelerating pathogenesis in the fungus itself. The first step of the pathway catalyzes the reaction from farnesyl diphosphate to alpha-ionylideneethane performed by the alpha-ionylideneethane synthase ABA3 via a three-step reaction mechanism involving 2 neutral intermediates, beta-farnesene and allofarnesene. The cytochrome P450 monooxygenase ABA1 might then be involved in the conversion of alpha-ionylideneethane to alpha-ionylideneacetic acid. Alpha-ionylideneacetic acid is further converted to abscisic acid in 2 steps involving the cytochrome P450 monooxygenase ABA2 and the short-chain dehydrogenase/reductase ABA4, via the intermediates 1'-deoxy-ABA or 1',4'-trans-diol-ABA, depending on the order of action of these 2 enzymes. ABA2 is responsible for the hydroxylation of carbon atom C-1' and ABA4 might be involved in the oxidation of the C-4' carbon atom. In Pyricularia oryzae (strain Y34) (Rice blast fungus), this protein is Cytochrome P450 monooxygenase ABA1.